Reading from the N-terminus, the 594-residue chain is CRISPR-associated DNA-binding protein Cas12m (594 aa).

Positions 1 to 85 (MSRLEARTRY…EKVRQVMVFE (85 aa)) are recognition domain (REC1-N). The interval 86 to 153 (SETTKKIKEL…ERSFIFEARK (68 aa)) is recognition domain (REC2). Residues 154–211 (QELAQLEKERWAVVKELGKGSGLYWCNLEDVVNSYDIGRKKAKAAGGEMRFHRWDGTG) are recognition domain (REC1-C). The interval 212–314 (KVTVRFQKGL…RYKLNLVLEI (103 aa)) is wedge domain (WED). The interval 315–329 (LGENTNRILPALEGT) is linker. Positions 330–540 (AAIDLGWRTV…KNHVEFTYVP (211 aa)) are ruvC-I. The target nucleic-acid binding (TNB) stretch occupies residues 541–575 (AENTTITCHKCGHKEKFDAAAQIIHTCSTCGELWD). The Zn(2+) site is built by C548, C551, C567, and C570. The segment at 576 to 594 (QDYNAAKNLLAFSQKGGVK) is ruvC-II. D577 contributes to the Mg(2+) binding site.

The protein belongs to the CRISPR-associated DNA-binding protein Cas12m family. Requires Mg(2+) as cofactor. Zn(2+) serves as cofactor.

In terms of biological role, CRISPR (clustered regularly interspaced short palindromic repeat), is an adaptive immune system that provides protection against mobile genetic elements (viruses, transposable elements and conjugative plasmids). CRISPR clusters contain sequences complementary to antecedent mobile elements and target invading nucleic acids. CRISPR clusters are transcribed and processed into CRISPR RNA (crRNA). Recognizes a short motif in the CRISPR repeat sequences (the 5' PAM or protospacer adjacent motif, 5'-C/TCN-3' in this organism) to help distinguish self versus nonself, as targets within the bacterial CRISPR locus do not have PAMs. Upon expression in E.coli as a CRISPR locus inhibits plasmid propagation when targeted to regions essential for plasmid propagation (replication origin but not a selectable marker), probably by inhibiting transcription. Cas12m-crRNA binds DNA in a PAM-dependent, crRNA-guided fashion. Upon expression in E.coli as a CRISPR region preferentially binds to its associated crRNA. Probably required for pre-crRNA processing to mature crRNA. The chain is CRISPR-associated DNA-binding protein Cas12m from Thermanaerosceptrum fracticalcis.